The sequence spans 295 residues: 15-cis-phytoene synthase (295 aa).

The protein belongs to the phytoene/squalene synthase family. ATP is required as a cofactor. The cofactor is Mn(2+).

The enzyme catalyses 2 (2E,6E,10E)-geranylgeranyl diphosphate = 15-cis-phytoene + 2 diphosphate. The protein operates within carotenoid biosynthesis; phytoene biosynthesis. Significant inhibition is seen at GGPP concentrations above 100 uM. In terms of biological role, involved in the biosynthesis of carotenoids. Catalyzes stereoselectively the condensation of two molecules of geranylgeranyl diphosphate (GGPP) to give prephytoene diphosphate (PPPP) and the subsequent rearrangement of the cyclopropylcarbinyl intermediate to yield 15-cis-phytoene. This Enterobacter agglomerans (Erwinia herbicola) protein is 15-cis-phytoene synthase (crtB).